We begin with the raw amino-acid sequence, 249 residues long: tRNA pseudouridine synthase A (249 aa).

The active-site Nucleophile is the D53. Y111 serves as a coordination point for substrate.

This sequence belongs to the tRNA pseudouridine synthase TruA family. In terms of assembly, homodimer.

It carries out the reaction uridine(38/39/40) in tRNA = pseudouridine(38/39/40) in tRNA. Functionally, formation of pseudouridine at positions 38, 39 and 40 in the anticodon stem and loop of transfer RNAs. The protein is tRNA pseudouridine synthase A of Streptococcus mutans serotype c (strain ATCC 700610 / UA159).